A 206-amino-acid chain; its full sequence is MGSRLPRDGGKQGHGAFLDGQLLVAMPGMSDNRFSRSVIYLCAHSEEGAMGIILNRPARKVTFSELLVQLDVIKADEMIRLPAQAELVQVLKGGPVETGRGFVLHSNDFFIDDSTLPIDAGVSLTATIDILRAIAKGDGPDRAILALGYAGWSAGQLEAEMQDNGWLNIPADPSLIFDEALGSKYERALQKIGIDPGRLSSDLGHA.

The protein belongs to the UPF0301 (AlgH) family.

This Methylocella silvestris (strain DSM 15510 / CIP 108128 / LMG 27833 / NCIMB 13906 / BL2) protein is UPF0301 protein Msil_1255.